The primary structure comprises 503 residues: ATP synthase subunit alpha (503 aa).

Residue 169–176 (GDRGTGKT) participates in ATP binding.

This sequence belongs to the ATPase alpha/beta chains family. F-type ATPases have 2 components, CF(1) - the catalytic core - and CF(0) - the membrane proton channel. CF(1) has five subunits: alpha(3), beta(3), gamma(1), delta(1), epsilon(1). CF(0) has three main subunits: a(1), b(2) and c(9-12). The alpha and beta chains form an alternating ring which encloses part of the gamma chain. CF(1) is attached to CF(0) by a central stalk formed by the gamma and epsilon chains, while a peripheral stalk is formed by the delta and b chains.

It is found in the cell inner membrane. The enzyme catalyses ATP + H2O + 4 H(+)(in) = ADP + phosphate + 5 H(+)(out). Produces ATP from ADP in the presence of a proton gradient across the membrane. The alpha chain is a regulatory subunit. The protein is ATP synthase subunit alpha of Leptospira borgpetersenii serovar Hardjo-bovis (strain L550).